The following is a 392-amino-acid chain: MATALYTANDFILISLPQNAQPVTAPGSKTDSWFNETLIGGRAFVSDFKIPEFKIGSLDTLIVESEELSKVDNQIGASIGKIIEILQGLNETSTNAYRTLPINNMPVPEYLENFQWQTRKFKLDKSIKDLITLISNESSQLDADVRATYANYNSAKTNLAAAERKKTGDLSVRSLHDIVKPEDFVLNSEHLTTVLVAVPKSLKSDFEKSYETLSKNVVPASASVIAEDAEYVLFNVHLFKKNVQEFTTAAREKKFIPREFNYSEELIDQLKKEHDSAASLEQSLRVQLVRLAKTAYVDVFINWFHIKALRVYVESVLRYGLPPHFNIKIIAVPPKNLSKCKSELIDAFGFLGGNAFMKDKKGKINKQDTSLHQYASLVDTEYEPFVMYIINL.

Residue Ala2 is modified to N-acetylalanine.

This sequence belongs to the V-ATPase C subunit family. In terms of assembly, V-ATPase is a heteromultimeric enzyme composed of a peripheral catalytic V1 complex (components A to H) attached to an integral membrane V0 proton pore complex (components: a, c, c', c'', d, e, f and VOA1). Interacts directly with VMA4.

It localises to the vacuole membrane. In terms of biological role, subunit of the V1 complex of vacuolar(H+)-ATPase (V-ATPase), a multisubunit enzyme composed of a peripheral complex (V1) that hydrolyzes ATP and a membrane integral complex (V0) that translocates protons. V-ATPase is responsible for acidifying and maintaining the pH of intracellular compartments. Subunit C is necessary for the assembly of the catalytic sector of the enzyme and is likely to have a specific function in its catalytic activity. Reversibly leaves the enzyme after glucose depletion, causing the catalytic subcomplex V1 to detach from the V0 section. This chain is V-type proton ATPase subunit C, found in Saccharomyces cerevisiae (strain ATCC 204508 / S288c) (Baker's yeast).